A 131-amino-acid polypeptide reads, in one-letter code: Small ribosomal subunit protein bS6 (131 aa).

Residues Val96 to Glu131 are disordered. Residues Lys104–Asp122 show a composition bias toward basic and acidic residues.

The protein belongs to the bacterial ribosomal protein bS6 family.

Functionally, binds together with bS18 to 16S ribosomal RNA. In Shewanella sp. (strain MR-4), this protein is Small ribosomal subunit protein bS6.